The chain runs to 416 residues: MWASFMWHGALSPGRRAHSALAQLRCILDSELEGIRGAGTWKSERVITSRQGPSIRVDGISGGILNFCANNYLGLSSHPAVIQAGLQTLEEFGAGLSSTRFICGTQSIHKNLEAKIAHFHQREDAILYPSCFDANAGLFEALLTPEDAVLSDELNHASIIDGIRLCKAHKYRYRHLDMADLEAKLKEAQKHRLRLVATDGAFSMDGDIAPLQDICRLAAQYGALVFVDECHATGFLGPTGRGTDELLGVMDQVTIINSTLGKALGGASGGYTTGPEPLVSLLRQRSRPYLFSNSLPPAVVGCASKALDLLMESNAIIQSMAAKTRRFRSKMEAAGFTVSGADHPICPVMLGDARLSSQMADDMLKKGIFVIGFSYPVVPKGKARIRVQISAVHSEEDIDRCVEAFVEVGRLHGALP.

The N-terminal 18 residues, Met1–His18, are a transit peptide targeting the mitochondrion. Lys42 carries the post-translational modification N6-acetyllysine; alternate. N6-succinyllysine; alternate is present on Lys42. Cys131–Phe132 serves as a coordination point for pyridoxal 5'-phosphate. His156 is a binding site for substrate. Lys184 bears the N6-acetyllysine; alternate mark. Lys184 is subject to N6-succinyllysine; alternate. Pyridoxal 5'-phosphate contacts are provided by residues Ser203, Thr259–Lys262, and Ser292–Asn293. N6-(pyridoxal phosphate)lysine is present on Lys262. 2 positions are modified to N6-succinyllysine: Lys323 and Lys365. Lys380 is subject to N6-acetyllysine; alternate. Lys380 carries the post-translational modification N6-succinyllysine; alternate. Arg386 contacts substrate.

Belongs to the class-II pyridoxal-phosphate-dependent aminotransferase family. It depends on pyridoxal 5'-phosphate as a cofactor.

It is found in the mitochondrion. Its subcellular location is the nucleus. The enzyme catalyses glycine + acetyl-CoA = (2S)-2-amino-3-oxobutanoate + CoA. Its pathway is amino-acid degradation; L-threonine degradation via oxydo-reductase pathway; glycine from L-threonine: step 2/2. In terms of biological role, pyridoxal phosphate (PLP) dependent enzyme, which catalyzes the cleavage of 2-amino-3-oxobutanoate to glycine and acetyl-CoA. Catalyzes the second reaction step on the main metabolic degradation pathway for L-threonine. The protein is 2-amino-3-ketobutyrate coenzyme A ligase, mitochondrial (Gcat) of Mus musculus (Mouse).